The following is a 432-amino-acid chain: D-amino acid dehydrogenase (432 aa).

3-17 (VVILGSGVVGVTSAW) is an FAD binding site.

This sequence belongs to the DadA oxidoreductase family. It depends on FAD as a cofactor.

The enzyme catalyses a D-alpha-amino acid + A + H2O = a 2-oxocarboxylate + AH2 + NH4(+). It functions in the pathway amino-acid degradation; D-alanine degradation; NH(3) and pyruvate from D-alanine: step 1/1. Its function is as follows. Oxidative deamination of D-amino acids. The polypeptide is D-amino acid dehydrogenase (Citrobacter koseri (strain ATCC BAA-895 / CDC 4225-83 / SGSC4696)).